The sequence spans 732 residues: Cullin-3A (732 aa).

Residues 662–724 (DRKPQIEAAI…RDFLERDSTD (63 aa)) enclose the Cullin neddylation domain. K676 participates in a covalent cross-link: Glycyl lysine isopeptide (Lys-Gly) (interchain with G-Cter in NEDD8).

Belongs to the cullin family. As to quaternary structure, interacts with CSN2 and RBX1A. Interacts with BTB/POZ domain-containing proteins BPM1, BPM2, BPM3, BPM6, BT1, BT2, BT3, BT5, AT1G01640, AT1G21780 and AT5G48510. Interacts with SR1IP1. Interacts with NPR3 and NPR4. Binds to NPR1; this interaction requires NPR3 and NPR4. Neddylated. Deneddylated via its interaction with the COP9 signalosome (CSN) complex.

Its function is as follows. Component of the cullin-RING ubiquitin ligases (CRL), or CUL3-RBX1-BTB protein E3 ligase complexes which mediate the ubiquitination and subsequent proteasomal degradation of target proteins. The functional specificity of the CRL complex depends on the BTB domain-containing protein as the substrate recognition component. Involved in embryo pattern formation and endosperm development. Required for the normal division and organization of the root stem cells and columella root cap cells. Regulates primary root growth by an unknown pathway, but in an ethylene-dependent manner. Functions in distal root patterning, by an ethylene-independent mechanism. Functionally redundant with CUL3B. The sequence is that of Cullin-3A from Arabidopsis thaliana (Mouse-ear cress).